The following is a 309-amino-acid chain: Porphobilinogen deaminase (309 aa).

Cysteine 241 is subject to S-(dipyrrolylmethanemethyl)cysteine.

Belongs to the HMBS family. Monomer. The cofactor is dipyrromethane.

The catalysed reaction is 4 porphobilinogen + H2O = hydroxymethylbilane + 4 NH4(+). It functions in the pathway porphyrin-containing compound metabolism; protoporphyrin-IX biosynthesis; coproporphyrinogen-III from 5-aminolevulinate: step 2/4. Tetrapolymerization of the monopyrrole PBG into the hydroxymethylbilane pre-uroporphyrinogen in several discrete steps. In Bacillus cereus (strain B4264), this protein is Porphobilinogen deaminase.